The primary structure comprises 600 residues: Integrator complex subunit 11 (600 aa).

The Zn(2+) site is built by His-68, His-70, Asp-72, His-73, His-157, and Asp-178. An HXHXDH motif motif is present at residues His-68–His-73. Glu-203 is a catalytic residue. A Glycyl lysine isopeptide (Lys-Gly) (interchain with G-Cter in SUMO) cross-link involves residue Lys-381. His-414 contributes to the Zn(2+) binding site. Glycyl lysine isopeptide (Lys-Gly) (interchain with G-Cter in SUMO) cross-links involve residues Lys-462 and Lys-475. Residues Leu-469 to Leu-479 carry the Nuclear localization signal motif.

The protein belongs to the metallo-beta-lactamase superfamily. RNA-metabolizing metallo-beta-lactamase-like family. INTS11 subfamily. Component of the Integrator complex, composed of core subunits INTS1, INTS2, INTS3, INTS4, INTS5, INTS6, INTS7, INTS8, INTS9/RC74, INTS10, INTS11/CPSF3L, INTS12, INTS13, INTS14 and INTS15. The core complex associates with protein phosphatase 2A subunits PPP2CA and PPP2R1A, to form the Integrator-PP2A (INTAC) complex. INTS11 is part of the RNA endonuclease subcomplex, composed of INTS4, INTS9, INTS11 and inositol hexakisphosphate (InsP6). Interacts with WDR73; interaction is required for the assembly of the RNA endonuclease subcomplex in the cytoplasm. Interacts with BRAT1; interaction is required for the assembly of the RNA endonuclease subcomplex and inhibits the endonuclease activity of INTS11 before formation of mature integrator complex. The cofactor is Zn(2+). In terms of processing, sumoylated; sumoylation regulates its subcellular location and is required for integrator complex integrity.

The protein resides in the nucleus. The protein localises to the cytoplasm. With respect to regulation, the RNA endonuclease activity is inhibited by BRAT1 that forms hyrogen bond and hydrophobic interactions with the active site. RNA endonuclease component of the integrator complex, a multiprotein complex that terminates RNA polymerase II (Pol II) transcription in the promoter-proximal region of genes. The integrator complex provides a quality checkpoint during transcription elongation by driving premature transcription termination of transcripts that are unfavorably configured for transcriptional elongation: the complex terminates transcription by (1) catalyzing dephosphorylation of the C-terminal domain (CTD) of Pol II subunit POLR2A/RPB1 and SUPT5H/SPT5, (2) degrading the exiting nascent RNA transcript via endonuclease activity and (3) promoting the release of Pol II from bound DNA. The integrator complex is also involved in terminating the synthesis of non-coding Pol II transcripts, such as enhancer RNAs (eRNAs), small nuclear RNAs (snRNAs), telomerase RNAs and long non-coding RNAs (lncRNAs). Within the integrator complex, INTS11 constitutes the RNA endonuclease subunit that degrades exiting nascent RNA transcripts. Mediates recruitment of cytoplasmic dynein to the nuclear envelope, probably as component of the integrator complex. This chain is Integrator complex subunit 11, found in Mus musculus (Mouse).